Here is a 133-residue protein sequence, read N- to C-terminus: Interleukin-4 (133 aa).

A signal peptide spans methionine 1 to glycine 24. 3 cysteine pairs are disulfide-bonded: cysteine 27-cysteine 133, cysteine 48-cysteine 85, and cysteine 70-cysteine 105. Residues asparagine 62, asparagine 96, and asparagine 102 are each glycosylated (N-linked (GlcNAc...) asparagine).

This sequence belongs to the IL-4/IL-13 family.

Its subcellular location is the secreted. Functionally, participates in at least several B-cell activation processes as well as of other cell types. It is a costimulator of DNA-synthesis. It induces the expression of class II MHC molecules on resting B-cells. It enhances both secretion and cell surface expression of IgE and IgG1. It also regulates the expression of the low affinity Fc receptor for IgE (CD23) on both lymphocytes and monocytes. Positively regulates IL31RA expression in macrophages. Stimulates autophagy in dendritic cells by interfering with mTORC1 signaling and through the induction of RUFY4. This chain is Interleukin-4 (IL4), found in Tursiops truncatus (Atlantic bottle-nosed dolphin).